A 439-amino-acid polypeptide reads, in one-letter code: GTPase Der (439 aa).

2 EngA-type G domains span residues 2 to 168 (ATVL…EEKG) and 181 to 357 (IKIA…SSYT). GTP-binding positions include 8–15 (GKPNVGKS), 55–59 (DTCGV), 118–121 (NKTE), 187–194 (GRPNVGKS), 234–238 (DTAGL), and 300–303 (NKWD). The KH-like domain occupies 358-439 (TKVPSSALNS…PIFLKFKKSR (82 aa)).

It belongs to the TRAFAC class TrmE-Era-EngA-EngB-Septin-like GTPase superfamily. EngA (Der) GTPase family. Associates with the 50S ribosomal subunit.

Its function is as follows. GTPase that plays an essential role in the late steps of ribosome biogenesis. In Thermotoga neapolitana (strain ATCC 49049 / DSM 4359 / NBRC 107923 / NS-E), this protein is GTPase Der.